Reading from the N-terminus, the 232-residue chain is Imidazole glycerol phosphate synthase subunit HisF (232 aa).

Residues Asp-11 and Asp-130 contribute to the active site.

Belongs to the HisA/HisF family. As to quaternary structure, heterodimer of HisH and HisF.

The protein resides in the cytoplasm. It carries out the reaction 5-[(5-phospho-1-deoxy-D-ribulos-1-ylimino)methylamino]-1-(5-phospho-beta-D-ribosyl)imidazole-4-carboxamide + L-glutamine = D-erythro-1-(imidazol-4-yl)glycerol 3-phosphate + 5-amino-1-(5-phospho-beta-D-ribosyl)imidazole-4-carboxamide + L-glutamate + H(+). Its pathway is amino-acid biosynthesis; L-histidine biosynthesis; L-histidine from 5-phospho-alpha-D-ribose 1-diphosphate: step 5/9. In terms of biological role, IGPS catalyzes the conversion of PRFAR and glutamine to IGP, AICAR and glutamate. The HisF subunit catalyzes the cyclization activity that produces IGP and AICAR from PRFAR using the ammonia provided by the HisH subunit. The polypeptide is Imidazole glycerol phosphate synthase subunit HisF (Listeria monocytogenes serotype 4a (strain HCC23)).